Here is a 371-residue protein sequence, read N- to C-terminus: MNKLPHETRVVIGMSGGVDSSVAALLLKEQGYDVIGIFMKNWDDTDENGVCTATEDYNDVIEVCNQIGIPYYAVNFEKQYWDKVFTYFLDEYRAGRTPNPDVMCNKEIKFKAFLEHAIALGADYVATGHYARVAYMDGEYKMLRGVDDNKDQTYFLNQLSQEQLSKTMFPLGELKKPQIREMAKEAGLATAAKKDSTGICFIGERNFKDFLSNYLPAQPGVMQTLSGEVKGKHDGLMYYTIGQRHGLGIGGNGDPWFAVGKNLKENILYVDQGFHNELLYGDEVIATNVGWVSNKAKEKEFKCTAKFRYRQEDNKVTVQIVDENTVRILCDEPIRAITPGQAVVFYDGDECLGGATIDEVYRSGKKLDYLG.

Residues 13-20 (GMSGGVDS) and methionine 39 each bind ATP. The interval 99–101 (NPD) is interaction with target base in tRNA. Cysteine 104 (nucleophile) is an active-site residue. Cysteine 104 and cysteine 200 are joined by a disulfide. ATP is bound at residue glycine 128. An interaction with tRNA region spans residues 150–152 (KDQ). The Cysteine persulfide intermediate role is filled by cysteine 200. The interaction with tRNA stretch occupies residues 308-309 (RY).

This sequence belongs to the MnmA/TRMU family.

The protein resides in the cytoplasm. The enzyme catalyses S-sulfanyl-L-cysteinyl-[protein] + uridine(34) in tRNA + AH2 + ATP = 2-thiouridine(34) in tRNA + L-cysteinyl-[protein] + A + AMP + diphosphate + H(+). Functionally, catalyzes the 2-thiolation of uridine at the wobble position (U34) of tRNA, leading to the formation of s(2)U34. The chain is tRNA-specific 2-thiouridylase MnmA from Bacillus cereus (strain ATCC 10987 / NRS 248).